The sequence spans 1368 residues: Mediator of RNA polymerase II transcription subunit 23 (1368 aa).

Residues 1343–1368 (VPPQAMNSGSPAPQSNQVPVSLPVTQ) are disordered. Over residues 1347–1368 (AMNSGSPAPQSNQVPVSLPVTQ) the composition is skewed to polar residues.

It belongs to the Mediator complex subunit 23 family. As to quaternary structure, interacts with ELK1. Component of the Mediator complex, which is composed of MED1, MED4, MED6, MED7, MED8, MED9, MED10, MED11, MED12, MED13, MED13L, MED14, MED15, MED16, MED17, MED18, MED19, MED20, MED21, MED22, MED23, MED24, MED25, MED26, MED27, MED29, MED30, MED31, CCNC, CDK8 and CDC2L6/CDK11. The MED12, MED13, CCNC and CDK8 subunits form a distinct module termed the CDK8 module. Mediator containing the CDK8 module is less active than Mediator lacking this module in supporting transcriptional activation. Individual preparations of the Mediator complex lacking one or more distinct subunits have been variously termed ARC, CRSP, DRIP, PC2, SMCC and TRAP. Interacts with CEBPB (when not methylated), CTNNB1, and GLI3. Interacts with the adenovirus E1A protein.

It localises to the nucleus. In terms of biological role, required for transcriptional activation subsequent to the assembly of the pre-initiation complex. Component of the Mediator complex, a coactivator involved in the regulated transcription of nearly all RNA polymerase II-dependent genes. Mediator functions as a bridge to convey information from gene-specific regulatory proteins to the basal RNA polymerase II transcription machinery. Mediator is recruited to promoters by direct interactions with regulatory proteins and serves as a scaffold for the assembly of a functional pre-initiation complex with RNA polymerase II and the general transcription factors. Required for transcriptional activation by adenovirus E1A protein. Required for ELK1-dependent transcriptional activation in response to activated Ras signaling. This is Mediator of RNA polymerase II transcription subunit 23 (MED23) from Homo sapiens (Human).